The following is a 233-amino-acid chain: Ribonuclease 3 (233 aa).

The RNase III domain occupies 4–126 (LNKLMERLGH…IVGAIYIDAG (123 aa)). A Mg(2+)-binding site is contributed by Glu39. The active site involves Asp43. Mg(2+) is bound by residues Asp112 and Glu115. The active site involves Glu115. Residues 153–222 (DAKSLLQEWL…AKRFLELLDD (70 aa)) enclose the DRBM domain.

It belongs to the ribonuclease III family. Homodimer. Requires Mg(2+) as cofactor.

Its subcellular location is the cytoplasm. The catalysed reaction is Endonucleolytic cleavage to 5'-phosphomonoester.. Its function is as follows. Digests double-stranded RNA. Involved in the processing of primary rRNA transcript to yield the immediate precursors to the large and small rRNAs (23S and 16S). Processes some mRNAs, and tRNAs when they are encoded in the rRNA operon. Processes pre-crRNA and tracrRNA of type II CRISPR loci if present in the organism. In Coxiella burnetii (strain RSA 331 / Henzerling II), this protein is Ribonuclease 3.